A 1046-amino-acid chain; its full sequence is Piwi-like protein 2 (1046 aa).

Residues 1–12 (MDPKRPTFPSPP) show a composition bias toward pro residues. The interval 1–35 (MDPKRPTFPSPPGVIRAPWQQSTEDQSQLLDQPSL) is disordered. Residues 19-31 (WQQSTEDQSQLLD) are compositionally biased toward polar residues. In terms of domain architecture, PAZ spans 462–575 (SVLDVMNLIY…LLPELSFMTG (114 aa)). The Piwi domain occupies 741-1032 (LVVCIMTGNR…LAFLSGQYLH (292 aa)). Catalysis depends on residues D818, E856, D888, and H1021.

Belongs to the argonaute family. Piwi subfamily. As to quaternary structure, component of the PET complex. Mg(2+) is required as a cofactor. Post-translationally, methylated on arginine residues; required for the interaction with Tudor domain-containing protein and subsequent localization to the meiotic nuage, also named P granule. In terms of tissue distribution, detected in primordial germ cells (PGCs) from 3 dpf. In adult, it is found in both the female and male gonad. In the ovary, it is present in all stages of germ cell differentiation. In testis, it is present in mitotic and meiotic germ cells. No protein has been detected in the fully differentiated sperm cell.

It localises to the cytoplasm. It is found in the nucleus. Its function is as follows. Endoribonuclease that plays a central role during spermatogenesis by repressing transposable elements and preventing their mobilization, which is essential for the germline integrity. Plays an essential role in germ cell differentiation and meiosis, independently of the function in transposable elements repression. Acts via the piRNA metabolic process, which mediates the repression of transposable elements during meiosis by forming complexes composed of piRNAs and Piwi proteins and govern the methylation and subsequent repression of transposons. During piRNA biosynthesis, plays a key role in the piRNA amplification loop, also named ping-pong amplification cycle, by acting as a 'slicer-competent' piRNA endoribonuclease that cleaves primary piRNAs, which are then loaded onto 'slicer-incompetent' piwil4. Piwil2 slicing produces a pre-miRNA intermediate, which is then processed in mature piRNAs, and as well as a 16 nucleotide by-product that is degraded. Required for piwil4/miwi2 nuclear localization and association with secondary piRNAs antisense. Represses circadian rhythms by promoting the stability and activity of core clock components BMAL1 and CLOCK. This chain is Piwi-like protein 2 (piwil2), found in Danio rerio (Zebrafish).